The sequence spans 512 residues: GMP synthase [glutamine-hydrolyzing] (512 aa).

The Glutamine amidotransferase type-1 domain occupies 7-197; the sequence is TILILDFGGQ…LFEVCDCSAD (191 aa). Catalysis depends on C84, which acts as the Nucleophile. Catalysis depends on residues H171 and E173. Residues 198–387 enclose the GMPS ATP-PPase domain; it reads WTMDSLIEQT…LGIPDEILYR (190 aa). Residue 225 to 231 participates in ATP binding; that stretch reads SGGVDSA.

In terms of assembly, homodimer.

It catalyses the reaction XMP + L-glutamine + ATP + H2O = GMP + L-glutamate + AMP + diphosphate + 2 H(+). The protein operates within purine metabolism; GMP biosynthesis; GMP from XMP (L-Gln route): step 1/1. In terms of biological role, catalyzes the synthesis of GMP from XMP. This is GMP synthase [glutamine-hydrolyzing] from Caldanaerobacter subterraneus subsp. tengcongensis (strain DSM 15242 / JCM 11007 / NBRC 100824 / MB4) (Thermoanaerobacter tengcongensis).